Here is a 190-residue protein sequence, read N- to C-terminus: Threonylcarbamoyl-AMP synthase (190 aa).

The YrdC-like domain occupies 7-190 (SQDVASLVIA…ALSGELIRQG (184 aa)).

It belongs to the SUA5 family. TsaC subfamily.

The protein localises to the cytoplasm. It catalyses the reaction L-threonine + hydrogencarbonate + ATP = L-threonylcarbamoyladenylate + diphosphate + H2O. Required for the formation of a threonylcarbamoyl group on adenosine at position 37 (t(6)A37) in tRNAs that read codons beginning with adenine. Catalyzes the conversion of L-threonine, HCO(3)(-)/CO(2) and ATP to give threonylcarbamoyl-AMP (TC-AMP) as the acyladenylate intermediate, with the release of diphosphate. The sequence is that of Threonylcarbamoyl-AMP synthase from Sodalis glossinidius (strain morsitans).